A 235-amino-acid chain; its full sequence is 5'-methylthioadenosine/S-adenosylhomocysteine nucleosidase (235 aa).

Glu12 (proton acceptor) is an active-site residue. Residues Gly78, Ile152, and 173 to 174 (ME) each bind substrate. Asp197 acts as the Proton donor in catalysis.

The protein belongs to the PNP/UDP phosphorylase family. MtnN subfamily. In terms of assembly, homodimer.

It carries out the reaction S-adenosyl-L-homocysteine + H2O = S-(5-deoxy-D-ribos-5-yl)-L-homocysteine + adenine. The enzyme catalyses S-methyl-5'-thioadenosine + H2O = 5-(methylsulfanyl)-D-ribose + adenine. The catalysed reaction is 5'-deoxyadenosine + H2O = 5-deoxy-D-ribose + adenine. It functions in the pathway amino-acid biosynthesis; L-methionine biosynthesis via salvage pathway; S-methyl-5-thio-alpha-D-ribose 1-phosphate from S-methyl-5'-thioadenosine (hydrolase route): step 1/2. Its function is as follows. Catalyzes the irreversible cleavage of the glycosidic bond in both 5'-methylthioadenosine (MTA) and S-adenosylhomocysteine (SAH/AdoHcy) to adenine and the corresponding thioribose, 5'-methylthioribose and S-ribosylhomocysteine, respectively. Also cleaves 5'-deoxyadenosine, a toxic by-product of radical S-adenosylmethionine (SAM) enzymes, into 5-deoxyribose and adenine. Thus, is required for in vivo function of the radical SAM enzymes biotin synthase and lipoic acid synthase, that are inhibited by 5'-deoxyadenosine accumulation. This Buchnera aphidicola subsp. Schizaphis graminum (strain Sg) protein is 5'-methylthioadenosine/S-adenosylhomocysteine nucleosidase.